The sequence spans 130 residues: L-ectoine synthase (130 aa).

This sequence belongs to the ectoine synthase family.

The catalysed reaction is (2S)-4-acetamido-2-aminobutanoate = L-ectoine + H2O. The protein operates within amine and polyamine biosynthesis; ectoine biosynthesis; L-ectoine from L-aspartate 4-semialdehyde: step 3/3. In terms of biological role, catalyzes the circularization of gamma-N-acetyl-alpha,gamma-diaminobutyric acid (ADABA) to ectoine (1,4,5,6-tetrahydro-2-methyl-4-pyrimidine carboxylic acid), which is an excellent osmoprotectant. This chain is L-ectoine synthase, found in Mycolicibacterium vanbaalenii (strain DSM 7251 / JCM 13017 / BCRC 16820 / KCTC 9966 / NRRL B-24157 / PYR-1) (Mycobacterium vanbaalenii).